The primary structure comprises 506 residues: Epstein-Barr nuclear antigen leader protein (506 aa).

2 disordered regions span residues 1 to 470 and 485 to 506; these read MGDR…PRPP and FEPP…EDED. A Phosphoserine; by host modification is found at Ser35.

The protein belongs to the lymphocryptovirus EBNA-LP family. Homooligomer. Interacts with host SP100; this interaction is important for EBNA-LP coactivator activity. Interacts with host HAX1, ERR1 and HSPA2. Interacts with host PRKDC and AKAP8L; these interactions modulate the coactivator function of EBNA-LP. Post-translationally, phosphorylated by the cellular protein kinase cdc2.

The protein localises to the host nucleus. Plays an important role in the establishment of B-cell immortalization by acting as an EBNA2 coactivator. This transcriptional activation preferentially enhances the expression of the major viral protein LMP1. The interaction between EBNA-LP and host SP100 correlates with coactivation of EBNA2 and the relocalization of SP100 from PML nuclear bodies into nucleoplasm. This Epstein-Barr virus (strain B95-8) (HHV-4) protein is Epstein-Barr nuclear antigen leader protein (EBNA-LP).